We begin with the raw amino-acid sequence, 485 residues long: uncharacterized protein (485 aa).

The next 13 membrane-spanning stretches (helical) occupy residues 13 to 33, 38 to 58, 79 to 99, 111 to 131, 160 to 180, 211 to 231, 234 to 254, 297 to 317, 321 to 341, 365 to 385, 388 to 408, 420 to 440, and 445 to 465; these read WSAL…VILS, PFEF…DMLA, ALYW…IILS, LSFL…GQQY, VIIG…LLTV, LLFS…SSIT, IVAR…FNVA, INFP…YLVF, WLFI…RMVA, IIIF…VGAA, FLIC…KPVL, FIPF…DIYI, and LTFF…TIFI.

Belongs to the polysaccharide synthase family.

The protein resides in the cell membrane. This is an uncharacterized protein from Klebsiella pneumoniae.